The sequence spans 153 residues: 6,7-dimethyl-8-ribityllumazine synthase (153 aa).

5-amino-6-(D-ribitylamino)uracil-binding positions include Trp-22, Ser-56–Glu-58, and Ala-80–Ile-82. Ala-85–Thr-86 is a (2S)-2-hydroxy-3-oxobutyl phosphate binding site. The active-site Proton donor is His-88. Residue Leu-113 participates in 5-amino-6-(D-ribitylamino)uracil binding. Arg-127 is a (2S)-2-hydroxy-3-oxobutyl phosphate binding site.

It belongs to the DMRL synthase family.

The enzyme catalyses (2S)-2-hydroxy-3-oxobutyl phosphate + 5-amino-6-(D-ribitylamino)uracil = 6,7-dimethyl-8-(1-D-ribityl)lumazine + phosphate + 2 H2O + H(+). The protein operates within cofactor biosynthesis; riboflavin biosynthesis; riboflavin from 2-hydroxy-3-oxobutyl phosphate and 5-amino-6-(D-ribitylamino)uracil: step 1/2. Its function is as follows. Catalyzes the formation of 6,7-dimethyl-8-ribityllumazine by condensation of 5-amino-6-(D-ribitylamino)uracil with 3,4-dihydroxy-2-butanone 4-phosphate. This is the penultimate step in the biosynthesis of riboflavin. The sequence is that of 6,7-dimethyl-8-ribityllumazine synthase from Herpetosiphon aurantiacus (strain ATCC 23779 / DSM 785 / 114-95).